A 307-amino-acid chain; its full sequence is uncharacterized protein (307 aa).

Basic and acidic residues-rich tracts occupy residues 42-52 (TCRSPGEDKCP) and 112-121 (QKKEEPEGSH). Positions 42-153 (TCRSPGEDKC…VPPAVASASA (112 aa)) are disordered. The segment covering 129-139 (KQHKKAKKRKS) has biased composition (basic residues).

This is an uncharacterized protein from Mus musculus (Mouse).